Consider the following 468-residue polypeptide: Adenosylhomocysteinase (468 aa).

Residues Thr-57, Asp-132, and Glu-194 each contribute to the substrate site. 195–197 (TTT) provides a ligand contact to NAD(+). Substrate-binding residues include Lys-224 and Asp-228. Residues Asn-229, 258–263 (GFGDVG), Glu-281, Asn-316, 337–339 (IGH), and Asn-382 contribute to the NAD(+) site.

Belongs to the adenosylhomocysteinase family. The cofactor is NAD(+).

The protein resides in the cytoplasm. It carries out the reaction S-adenosyl-L-homocysteine + H2O = L-homocysteine + adenosine. Its pathway is amino-acid biosynthesis; L-homocysteine biosynthesis; L-homocysteine from S-adenosyl-L-homocysteine: step 1/1. May play a key role in the regulation of the intracellular concentration of adenosylhomocysteine. The polypeptide is Adenosylhomocysteinase (Methylorubrum extorquens (strain CM4 / NCIMB 13688) (Methylobacterium extorquens)).